The sequence spans 574 residues: Ribonuclease Y (574 aa).

Residues 1-21 form a helical membrane-spanning segment; that stretch reads MSLLDLVLLLLVLGLGGVLLL. In terms of domain architecture, KH spans 264 to 327; the sequence is AVTVVPIPSD…EIARMALEEL (64 aa). An HD domain is found at 390–483; that stretch reads VLKHSIQVAH…VAAADALSAA (94 aa).

It belongs to the RNase Y family.

The protein localises to the cell membrane. In terms of biological role, endoribonuclease that initiates mRNA decay. The polypeptide is Ribonuclease Y (Thermus thermophilus (strain ATCC 27634 / DSM 579 / HB8)).